A 160-amino-acid chain; its full sequence is Cytochrome b6-f complex subunit 4 (160 aa).

3 consecutive transmembrane segments (helical) span residues 36 to 56, 95 to 115, and 131 to 151; these read LLYMFPVVIFGSFACVIGLAV, LLGVLLMAAVPAGLLTVPFIE, and TVFLIGTFAAIWLGIGACLPI.

Belongs to the cytochrome b family. PetD subfamily. The 4 large subunits of the cytochrome b6-f complex are cytochrome b6, subunit IV (17 kDa polypeptide, petD), cytochrome f and the Rieske protein, while the 4 small subunits are petG, petL, petM and petN. The complex functions as a dimer.

Its subcellular location is the plastid. The protein resides in the chloroplast thylakoid membrane. Functionally, component of the cytochrome b6-f complex, which mediates electron transfer between photosystem II (PSII) and photosystem I (PSI), cyclic electron flow around PSI, and state transitions. The chain is Cytochrome b6-f complex subunit 4 from Tupiella akineta (Green alga).